Consider the following 829-residue polypeptide: Probable methyltransferase PMT26 (829 aa).

Topologically, residues 1-17 (MAQPRYTRIDNRRPSSN) are cytoplasmic. Residues 18–38 (YCSTVTVVVFVALCLVGIWMM) form a helical; Signal-anchor for type II membrane protein membrane-spanning segment. Residues 39-829 (TSSSVGPAQN…EVETLTYAIG (791 aa)) lie on the Lumenal side of the membrane. The segment at 55-258 (DNKDGIKKQM…TSGDLSPPGA (204 aa)) is disordered. 4 stretches are compositionally biased toward basic and acidic residues: residues 85 to 143 (NEDK…DSKS), 151 to 160 (LDEKKDLKDN), 168 to 177 (TNEKQTKPET), and 187 to 231 (ENQK…KENT). 4 N-linked (GlcNAc...) asparagine glycosylation sites follow: Asn-215, Asn-247, Asn-264, and Asn-270. Residues 241–252 (QEGQSKNETSGD) are compositionally biased toward polar residues. The disordered stretch occupies residues 271-291 (GSFSTQATESKNEKEAQKGSG). Basic and acidic residues predominate over residues 280–291 (SKNEKEAQKGSG). N-linked (GlcNAc...) asparagine glycans are attached at residues Asn-302, Asn-579, Asn-595, and Asn-756.

This sequence belongs to the methyltransferase superfamily.

The protein localises to the golgi apparatus membrane. The sequence is that of Probable methyltransferase PMT26 from Arabidopsis thaliana (Mouse-ear cress).